Consider the following 177-residue polypeptide: MSKYQIDIEINSASQQLPSEEHIRQWISTALDSQQLDEAEVSVYIVDTDEGRDLNREYRERDYATNVLSFPADIPPEVEIPLLGDLVVCAPVVEHEADEQHKPLDAHWAHMLIHGSLHLLGYDHIDNDEAETMEALETQLLARLGYADPYDEASYPEAIPTNPAPRRQASSSAGHIE.

Residues H114, H118, and H124 each contribute to the Zn(2+) site. The segment at 154 to 177 (SYPEAIPTNPAPRRQASSSAGHIE) is disordered. A compositionally biased stretch (polar residues) spans 168 to 177 (QASSSAGHIE).

It belongs to the endoribonuclease YbeY family. It depends on Zn(2+) as a cofactor.

Its subcellular location is the cytoplasm. Single strand-specific metallo-endoribonuclease involved in late-stage 70S ribosome quality control and in maturation of the 3' terminus of the 16S rRNA. This Cellvibrio japonicus (strain Ueda107) (Pseudomonas fluorescens subsp. cellulosa) protein is Endoribonuclease YbeY.